A 206-amino-acid polypeptide reads, in one-letter code: Protein GrpE (206 aa).

The span at 1 to 18 (MNNEDKKLQDEQLQKETV) shows a compositional bias: basic and acidic residues. The interval 1–21 (MNNEDKKLQDEQLQKETVEAA) is disordered.

Belongs to the GrpE family. In terms of assembly, homodimer.

It is found in the cytoplasm. Functionally, participates actively in the response to hyperosmotic and heat shock by preventing the aggregation of stress-denatured proteins, in association with DnaK and GrpE. It is the nucleotide exchange factor for DnaK and may function as a thermosensor. Unfolded proteins bind initially to DnaJ; upon interaction with the DnaJ-bound protein, DnaK hydrolyzes its bound ATP, resulting in the formation of a stable complex. GrpE releases ADP from DnaK; ATP binding to DnaK triggers the release of the substrate protein, thus completing the reaction cycle. Several rounds of ATP-dependent interactions between DnaJ, DnaK and GrpE are required for fully efficient folding. The sequence is that of Protein GrpE from Photobacterium profundum (strain SS9).